A 232-amino-acid polypeptide reads, in one-letter code: Large ribosomal subunit protein uL1 (232 aa).

It belongs to the universal ribosomal protein uL1 family. Part of the 50S ribosomal subunit.

Functionally, binds directly to 23S rRNA. The L1 stalk is quite mobile in the ribosome, and is involved in E site tRNA release. Its function is as follows. Protein L1 is also a translational repressor protein, it controls the translation of the L11 operon by binding to its mRNA. The protein is Large ribosomal subunit protein uL1 of Bordetella petrii (strain ATCC BAA-461 / DSM 12804 / CCUG 43448).